A 689-amino-acid polypeptide reads, in one-letter code: UvrABC system protein C (689 aa).

Over residues 1–19 (MTSDSSDTAKQIGSGQPSG) the composition is skewed to polar residues. Positions 1–59 (MTSDSSDTAKQIGSGQPSGSPADMRRRDGVAPEQEVDPASLETDEDDEARLPDLPDEPV) are disordered. Acidic residues predominate over residues 42–59 (ETDEDDEARLPDLPDEPV). In terms of domain architecture, GIY-YIG spans 83 to 161 (TSPGVYRMMN…IKQLRPRFNV (79 aa)). Residues 271–306 (RAVKEDLARAMEQAAADLAFERAALYRDRLAALSAI) form the UVR domain.

Belongs to the UvrC family. Interacts with UvrB in an incision complex.

The protein resides in the cytoplasm. Its function is as follows. The UvrABC repair system catalyzes the recognition and processing of DNA lesions. UvrC both incises the 5' and 3' sides of the lesion. The N-terminal half is responsible for the 3' incision and the C-terminal half is responsible for the 5' incision. This chain is UvrABC system protein C, found in Nitrobacter winogradskyi (strain ATCC 25391 / DSM 10237 / CIP 104748 / NCIMB 11846 / Nb-255).